Reading from the N-terminus, the 125-residue chain is Thioredoxin H-type (125 aa).

The Thioredoxin domain occupies 2-112; the sequence is AEGNVFACHS…LERKVAALAA (111 aa). Residues Cys38 and Cys41 each act as nucleophile in the active site. Cysteines 38 and 41 form a disulfide.

Belongs to the thioredoxin family. Plant H-type subfamily.

Its subcellular location is the cytoplasm. Functionally, participates in various redox reactions through the reversible oxidation of the active center dithiol to a disulfide. The H form is known to activate a number of cytosolic enzymes. The protein is Thioredoxin H-type (SB09) of Picea mariana (Black spruce).